A 136-amino-acid polypeptide reads, in one-letter code: Large ribosomal subunit protein uL16c (136 aa).

The interval 1–20 (MLSPKRTKFRKQHRGRMKGK) is disordered.

This sequence belongs to the universal ribosomal protein uL16 family. Part of the 50S ribosomal subunit.

Its subcellular location is the plastid. The protein resides in the chloroplast. The chain is Large ribosomal subunit protein uL16c from Brachypodium distachyon (Purple false brome).